Here is a 122-residue protein sequence, read N- to C-terminus: Ribonuclease P protein component (122 aa).

The protein belongs to the RnpA family. As to quaternary structure, consists of a catalytic RNA component (M1 or rnpB) and a protein subunit.

The catalysed reaction is Endonucleolytic cleavage of RNA, removing 5'-extranucleotides from tRNA precursor.. In terms of biological role, RNaseP catalyzes the removal of the 5'-leader sequence from pre-tRNA to produce the mature 5'-terminus. It can also cleave other RNA substrates such as 4.5S RNA. The protein component plays an auxiliary but essential role in vivo by binding to the 5'-leader sequence and broadening the substrate specificity of the ribozyme. The sequence is that of Ribonuclease P protein component from Synechococcus elongatus (strain ATCC 33912 / PCC 7942 / FACHB-805) (Anacystis nidulans R2).